The following is a 522-amino-acid chain: Peptide methionine sulfoxide reductase MsrA/MsrB (522 aa).

The 158-residue stretch at 17–174 folds into the Thioredoxin domain; the sequence is LALGACSPKI…ALALIRNPNA (158 aa). Cysteines 68 and 71 form a disulfide. The segment at 199-354 is peptide methionine sulfoxide reductase A; the sequence is RTIYLAGGCF…PNGYCHIDIR (156 aa). Cysteine 207 is an active-site residue. The MsrB domain maps to 383-506; that stretch reads DAELKRTLTE…NGASLKFIPL (124 aa). Cysteine 440 and cysteine 495 are joined by a disulfide. The active-site Nucleophile is the cysteine 495.

This sequence in the N-terminal section; belongs to the thioredoxin family. It in the central section; belongs to the MsrA Met sulfoxide reductase family. In the C-terminal section; belongs to the MsrB Met sulfoxide reductase family.

The enzyme catalyses L-methionyl-[protein] + [thioredoxin]-disulfide + H2O = L-methionyl-(S)-S-oxide-[protein] + [thioredoxin]-dithiol. It catalyses the reaction [thioredoxin]-disulfide + L-methionine + H2O = L-methionine (S)-S-oxide + [thioredoxin]-dithiol. It carries out the reaction L-methionyl-[protein] + [thioredoxin]-disulfide + H2O = L-methionyl-(R)-S-oxide-[protein] + [thioredoxin]-dithiol. Functionally, has an important function as a repair enzyme for proteins that have been inactivated by oxidation. Catalyzes the reversible oxidation-reduction of methionine sulfoxide in proteins to methionine. The chain is Peptide methionine sulfoxide reductase MsrA/MsrB (msrAB) from Neisseria gonorrhoeae.